A 282-amino-acid chain; its full sequence is 4-hydroxy-3-methylbut-2-enyl diphosphate reductase (282 aa).

Cys-14 provides a ligand contact to [4Fe-4S] cluster. (2E)-4-hydroxy-3-methylbut-2-enyl diphosphate contacts are provided by His-43 and His-78. Dimethylallyl diphosphate contacts are provided by His-43 and His-78. Isopentenyl diphosphate-binding residues include His-43 and His-78. Cys-100 contacts [4Fe-4S] cluster. His-128 lines the (2E)-4-hydroxy-3-methylbut-2-enyl diphosphate pocket. Position 128 (His-128) interacts with dimethylallyl diphosphate. His-128 is an isopentenyl diphosphate binding site. Glu-130 (proton donor) is an active-site residue. Thr-164 serves as a coordination point for (2E)-4-hydroxy-3-methylbut-2-enyl diphosphate. [4Fe-4S] cluster is bound at residue Cys-192. (2E)-4-hydroxy-3-methylbut-2-enyl diphosphate is bound by residues Ser-220, Ser-221, Asn-222, and Ser-266. Ser-220, Ser-221, Asn-222, and Ser-266 together coordinate dimethylallyl diphosphate. Ser-220, Ser-221, Asn-222, and Ser-266 together coordinate isopentenyl diphosphate.

This sequence belongs to the IspH family. [4Fe-4S] cluster serves as cofactor.

It catalyses the reaction isopentenyl diphosphate + 2 oxidized [2Fe-2S]-[ferredoxin] + H2O = (2E)-4-hydroxy-3-methylbut-2-enyl diphosphate + 2 reduced [2Fe-2S]-[ferredoxin] + 2 H(+). The catalysed reaction is dimethylallyl diphosphate + 2 oxidized [2Fe-2S]-[ferredoxin] + H2O = (2E)-4-hydroxy-3-methylbut-2-enyl diphosphate + 2 reduced [2Fe-2S]-[ferredoxin] + 2 H(+). The protein operates within isoprenoid biosynthesis; dimethylallyl diphosphate biosynthesis; dimethylallyl diphosphate from (2E)-4-hydroxy-3-methylbutenyl diphosphate: step 1/1. It participates in isoprenoid biosynthesis; isopentenyl diphosphate biosynthesis via DXP pathway; isopentenyl diphosphate from 1-deoxy-D-xylulose 5-phosphate: step 6/6. Its function is as follows. Catalyzes the conversion of 1-hydroxy-2-methyl-2-(E)-butenyl 4-diphosphate (HMBPP) into a mixture of isopentenyl diphosphate (IPP) and dimethylallyl diphosphate (DMAPP). Acts in the terminal step of the DOXP/MEP pathway for isoprenoid precursor biosynthesis. This chain is 4-hydroxy-3-methylbut-2-enyl diphosphate reductase, found in Clostridium perfringens (strain 13 / Type A).